Reading from the N-terminus, the 347-residue chain is Acetylglutamate kinase, chloroplastic (347 aa).

Residues 1-50 (MATVTSNASPKSFSFTVSNPFKTLIPNKSPSLCYPTRNKNHHRLGFSIKA) constitute a chloroplast transit peptide. T51 carries the post-translational modification N-acetylthreonine. 94–95 (GA) is an ATP binding site. N-acetyl-L-glutamate-binding positions include G126, R148, and 242–245 (NINA). K260 contributes to the L-arginine binding site. Residues 265-266 (TD) and L271 contribute to the ATP site. Position 282 (K282) interacts with L-arginine. ATP is bound at residue 297–305 (KVAGGMIPK). L-arginine is bound by residues 334–337 (EIMS) and G342.

This sequence belongs to the acetylglutamate kinase family. ArgB subfamily. As to quaternary structure, interacts with GLB1. Interaction is dependent of MgATP and inhibited by 2-oxoglutarate, arginine, glutamate, citrate, and oxaloacetate.

The protein localises to the plastid. It localises to the chloroplast stroma. The enzyme catalyses N-acetyl-L-glutamate + ATP = N-acetyl-L-glutamyl 5-phosphate + ADP. It participates in amino-acid biosynthesis; L-arginine biosynthesis; N(2)-acetyl-L-ornithine from L-glutamate: step 2/4. With respect to regulation, inhibited by arginine. Inhibition is relieved by binding to GLB1. In terms of biological role, involved in the arginine biosynthetic pathway via the intermediate compound ornithine. The protein is Acetylglutamate kinase, chloroplastic of Arabidopsis thaliana (Mouse-ear cress).